The primary structure comprises 342 residues: Holliday junction branch migration complex subunit RuvB (342 aa).

The large ATPase domain (RuvB-L) stretch occupies residues 1–185 (MREDYLKSDD…FGINARLEYY (185 aa)). ATP-binding positions include L24, R25, G66, K69, T70, T71, 132–134 (EDY), R175, Y185, and R222. Residue T70 coordinates Mg(2+). Positions 186-256 (DAKLLTRIVQ…IARIALQALN (71 aa)) are small ATPAse domain (RuvB-S). The interval 259–342 (HNGLDDMDNR…PPAQSGTLFE (84 aa)) is head domain (RuvB-H). 2 residues coordinate DNA: R314 and R319.

It belongs to the RuvB family. In terms of assembly, homohexamer. Forms an RuvA(8)-RuvB(12)-Holliday junction (HJ) complex. HJ DNA is sandwiched between 2 RuvA tetramers; dsDNA enters through RuvA and exits via RuvB. An RuvB hexamer assembles on each DNA strand where it exits the tetramer. Each RuvB hexamer is contacted by two RuvA subunits (via domain III) on 2 adjacent RuvB subunits; this complex drives branch migration. In the full resolvosome a probable DNA-RuvA(4)-RuvB(12)-RuvC(2) complex forms which resolves the HJ.

It is found in the cytoplasm. It carries out the reaction ATP + H2O = ADP + phosphate + H(+). The RuvA-RuvB-RuvC complex processes Holliday junction (HJ) DNA during genetic recombination and DNA repair, while the RuvA-RuvB complex plays an important role in the rescue of blocked DNA replication forks via replication fork reversal (RFR). RuvA specifically binds to HJ cruciform DNA, conferring on it an open structure. The RuvB hexamer acts as an ATP-dependent pump, pulling dsDNA into and through the RuvAB complex. RuvB forms 2 homohexamers on either side of HJ DNA bound by 1 or 2 RuvA tetramers; 4 subunits per hexamer contact DNA at a time. Coordinated motions by a converter formed by DNA-disengaged RuvB subunits stimulates ATP hydrolysis and nucleotide exchange. Immobilization of the converter enables RuvB to convert the ATP-contained energy into a lever motion, pulling 2 nucleotides of DNA out of the RuvA tetramer per ATP hydrolyzed, thus driving DNA branch migration. The RuvB motors rotate together with the DNA substrate, which together with the progressing nucleotide cycle form the mechanistic basis for DNA recombination by continuous HJ branch migration. Branch migration allows RuvC to scan DNA until it finds its consensus sequence, where it cleaves and resolves cruciform DNA. The chain is Holliday junction branch migration complex subunit RuvB from Cytophaga hutchinsonii (strain ATCC 33406 / DSM 1761 / CIP 103989 / NBRC 15051 / NCIMB 9469 / D465).